A 330-amino-acid polypeptide reads, in one-letter code: Phenylalanine--tRNA ligase alpha subunit (330 aa).

Glu-246 serves as a coordination point for Mg(2+).

This sequence belongs to the class-II aminoacyl-tRNA synthetase family. Phe-tRNA synthetase alpha subunit type 1 subfamily. As to quaternary structure, tetramer of two alpha and two beta subunits. Mg(2+) is required as a cofactor.

The protein localises to the cytoplasm. The catalysed reaction is tRNA(Phe) + L-phenylalanine + ATP = L-phenylalanyl-tRNA(Phe) + AMP + diphosphate + H(+). The protein is Phenylalanine--tRNA ligase alpha subunit of Sulfurimonas denitrificans (strain ATCC 33889 / DSM 1251) (Thiomicrospira denitrificans (strain ATCC 33889 / DSM 1251)).